The primary structure comprises 566 residues: DDB1- and CUL4-associated factor 10 (566 aa).

Disordered regions lie at residues methionine 1–alanine 72 and threonine 87–leucine 123. A phosphoserine mark is found at serine 50, serine 57, serine 67, serine 96, serine 99, and serine 100. Low complexity predominate over residues threonine 87–serine 100. Residue arginine 141 is modified to Omega-N-methylarginine. WD repeat units lie at residues arginine 173–threonine 212, alanine 216–cysteine 254, glycine 258–cysteine 297, and phenylalanine 303–glutamate 342. Residues threonine 354–serine 374 are compositionally biased toward low complexity. Residues threonine 354 to glutamate 413 are disordered. At serine 356 the chain carries Phosphoserine. Basic and acidic residues predominate over residues histidine 377 to methionine 388. WD repeat units follow at residues aspartate 415–alanine 455, valine 477–valine 515, and serine 533–phenylalanine 566.

Belongs to the WD repeat DCAF10 family. In terms of assembly, interacts with DDB1.

The protein operates within protein modification; protein ubiquitination. Its function is as follows. May function as a substrate receptor for CUL4-DDB1 E3 ubiquitin-protein ligase complex. In Mus musculus (Mouse), this protein is DDB1- and CUL4-associated factor 10 (Dcaf10).